The primary structure comprises 365 residues: Cobalt-precorrin-5B C(1)-methyltransferase (365 aa).

It belongs to the CbiD family.

The enzyme catalyses Co-precorrin-5B + S-adenosyl-L-methionine = Co-precorrin-6A + S-adenosyl-L-homocysteine. It participates in cofactor biosynthesis; adenosylcobalamin biosynthesis; cob(II)yrinate a,c-diamide from sirohydrochlorin (anaerobic route): step 6/10. Functionally, catalyzes the methylation of C-1 in cobalt-precorrin-5B to form cobalt-precorrin-6A. The protein is Cobalt-precorrin-5B C(1)-methyltransferase of Methanococcus maripaludis (strain C5 / ATCC BAA-1333).